The sequence spans 235 residues: Ribosomal RNA small subunit methyltransferase G (235 aa).

S-adenosyl-L-methionine-binding positions include Gly74, Phe79, 97–99 (EAT), 125–126 (AE), and Arg144.

This sequence belongs to the methyltransferase superfamily. RNA methyltransferase RsmG family.

Its subcellular location is the cytoplasm. Specifically methylates the N7 position of a guanine in 16S rRNA. The protein is Ribosomal RNA small subunit methyltransferase G of Dehalococcoides mccartyi (strain CBDB1).